A 166-amino-acid chain; its full sequence is Ribosome maturation factor RimM (166 aa).

Residues 94–166 form the PRC barrel domain; that stretch reads GDEYYWRDLM…EMVVRLLPGL (73 aa).

The protein belongs to the RimM family. In terms of assembly, binds ribosomal protein uS19.

Its subcellular location is the cytoplasm. Its function is as follows. An accessory protein needed during the final step in the assembly of 30S ribosomal subunit, possibly for assembly of the head region. Essential for efficient processing of 16S rRNA. May be needed both before and after RbfA during the maturation of 16S rRNA. It has affinity for free ribosomal 30S subunits but not for 70S ribosomes. The polypeptide is Ribosome maturation factor RimM (Syntrophus aciditrophicus (strain SB)).